The following is a 714-amino-acid chain: MEMASAFTLNVRLDNIAIITIDVPDEKMNTLKAEFASQVRAIIKQLRENKELRGVVFISAKPDNFIAGADINMIGNCKTAQEAEALARQGQQLMAEIHALPIPVIAAIHGACLGGGLELALACHGRVCTDDPKTVLGLPEVQLGLLPGSGGTQRLPRLIGVSTALEMILTGKQLRAKQALKLGLVDDVVPHSILLEVAVELAKKDRPSSRPLPVRERILAGPLGRALLFKMVGKKTEHKTQGNYPATERILEVVETGLAQGTSSGYDAEARAFGELAMTPQSQALRSIFFASTDVKKDPGSDAPPAPLNSVGILGGGLMGGGIAYVTACKAGLPVRIKDINPQGINHALKYSWDQLEGKVRRRHLKASERDKQLALISGTTDYRGFAHRDLIIEAVFENLELKQQMVAEVEQNCAAHTIFASNTSSLPIGDIAAHATRPEQVIGLHFFSPVEKMPLVEIIPHAGTSAQTIATTVKLAKKQGKTPIVVRDKAGFYVNRILAPYINEAIRMLTKGERVEHIDAALVKFGFPVGPIQLLDEVGIDTGTKIIPVLEAAYGERFSAPANVVSSILNDDRKGRKNGRGFYLYGQKGRKSKKQVDPAIYPLIGAQGQGRLSAPQVAERCVMLMLNEAVRCVDEQVIRSVRDGDIGAVFGIGFPPFLGGPFRYIDSLGAGEVVAIMQRLATQYGSRFTPCERLVEMGARGESFWKTTATDLQ.

Residues 1 to 190 are enoyl-CoA hydratase; the sequence is MEMASAFTLN…KLGLVDDVVP (190 aa). Residues 306-714 are 3-hydroxyacyl-CoA dehydrogenase; it reads APLNSVGILG…FWKTTATDLQ (409 aa).

It in the N-terminal section; belongs to the enoyl-CoA hydratase/isomerase family. The protein in the central section; belongs to the 3-hydroxyacyl-CoA dehydrogenase family. As to quaternary structure, heterotetramer of two alpha chains (FadJ) and two beta chains (FadI).

The protein localises to the cytoplasm. The catalysed reaction is a (3S)-3-hydroxyacyl-CoA = a (2E)-enoyl-CoA + H2O. It catalyses the reaction a 4-saturated-(3S)-3-hydroxyacyl-CoA = a (3E)-enoyl-CoA + H2O. The enzyme catalyses a (3S)-3-hydroxyacyl-CoA + NAD(+) = a 3-oxoacyl-CoA + NADH + H(+). It carries out the reaction (3S)-3-hydroxybutanoyl-CoA = (3R)-3-hydroxybutanoyl-CoA. The protein operates within lipid metabolism; fatty acid beta-oxidation. In terms of biological role, catalyzes the formation of a hydroxyacyl-CoA by addition of water on enoyl-CoA. Also exhibits 3-hydroxyacyl-CoA epimerase and 3-hydroxyacyl-CoA dehydrogenase activities. This is Fatty acid oxidation complex subunit alpha from Shigella boydii serotype 18 (strain CDC 3083-94 / BS512).